A 507-amino-acid polypeptide reads, in one-letter code: Lysine--tRNA ligase (507 aa).

Positions 26–34 match the 'HIGH' region motif; it reads PSGPIHVGN. A 'KMSKS' region motif is present at residues 270–274; the sequence is AMHSS.

Belongs to the class-I aminoacyl-tRNA synthetase family.

It is found in the cytoplasm. It catalyses the reaction tRNA(Lys) + L-lysine + ATP = L-lysyl-tRNA(Lys) + AMP + diphosphate. The protein is Lysine--tRNA ligase (lysS) of Thermoplasma acidophilum (strain ATCC 25905 / DSM 1728 / JCM 9062 / NBRC 15155 / AMRC-C165).